The chain runs to 683 residues: Solute carrier organic anion transporter family member 2B1 (683 aa).

The interval 1-30 is disordered; sequence MPDRSTKTTMGTEDMHERKVSVEPQDSHQD. Over 1 to 41 the chain is Cytoplasmic; that stretch reads MPDRSTKTTMGTEDMHERKVSVEPQDSHQDAQPRGMFHNIK. The span at 13–30 shows a compositional bias: basic and acidic residues; the sequence is EDMHERKVSVEPQDSHQD. The residue at position 21 (S21) is a Phosphoserine. The chain crosses the membrane as a helical span at residues 42-61; it reads FFVLCHSLLQLTQLMISGYL. The Extracellular segment spans residues 62–80; sequence KSSISTVEKRFGLSSQISG. A helical transmembrane segment spans residues 81 to 101; sequence LLAAFNEVGNVSLILFVSYFG. Residues 102 to 107 are Cytoplasmic-facing; it reads SRVHRP. Residues 108 to 132 traverse the membrane as a helical segment; that stretch reads RMIGYGALLVATAGLLMALPHFISE. At 133–177 the chain is on the extracellular side; sequence PYRYDHSSSDNRSLDFEASLCLPTTMAPASALSNGSCSSHTETKH. N-linked (GlcNAc...) asparagine glycans are attached at residues N143 and N166. Residues 178–207 form a helical membrane-spanning segment; sequence LTMVGIMFAAQTLLGIGGVPIQPFGISYID. Topologically, residues 208-226 are cytoplasmic; that stretch reads DFAHHSNSPLYIGILFGIT. Residues 227–247 traverse the membrane as a helical segment; that stretch reads TMGPGLAYGLGSLMLRLYVDI. Topologically, residues 248–265 are extracellular; the sequence is DRMPEGGINLTPKDPRWV. A helical membrane pass occupies residues 266–290; sequence GAWWLGFLISSGLVVLASSPYFFFP. Residues 291–355 lie on the Cytoplasmic side of the membrane; it reads REMPKEKHEF…VKVFPRVLLR (65 aa). Residues S312 and S315 each carry the phosphoserine modification. Residues 356–377 traverse the membrane as a helical segment; it reads NLRHPIFLLVVLSQVCTSSMVA. The Extracellular portion of the chain corresponds to 378 to 397; sequence GMATFLPKFLERQFSITASF. The helical transmembrane segment at 398–421 threads the bilayer; it reads ANMLLGCLTIPLVIVGIMMGGVLV. The Cytoplasmic portion of the chain corresponds to 422 to 425; it reads KRLH. The helical transmembrane segment at 426–449 threads the bilayer; it reads LSPVQCSALCLLGSLLCLLFSVPL. Residues 450–553 lie on the Extracellular side of the membrane; it reads FFIGCSTHQI…SACSRLVLPF (104 aa). Residues 472-532 enclose the Kazal-like domain; the sequence is PSLFPGCSEP…VFYTNCSCVA (61 aa). 3 disulfides stabilise this stretch: C478–C509, C484–C505, and C493–C530. 2 N-linked (GlcNAc...) asparagine glycosylation sites follow: N527 and N534. A helical transmembrane segment spans residues 554–576; it reads IVLFSLGAGLASITHTPSFMLIL. Residues 577 to 585 lie on the Cytoplasmic side of the membrane; the sequence is RGVKKEDKT. A helical transmembrane segment spans residues 586–611; the sequence is LAVGMQFMLLRVLAWMPSPVIHGSAI. Over 612 to 644 the chain is Extracellular; the sequence is DTTCVHWALTCGRRAVCRYYDHDLLRNRFIGLQ. The chain crosses the membrane as a helical span at residues 645–662; it reads FFFKSGSLVCFTLVLAIL. The Cytoplasmic portion of the chain corresponds to 663–683; it reads RQQSREASTRTTVKSSELQQL.

This sequence belongs to the organo anion transporter (TC 2.A.60) family. As to expression, expressed in liver, kidney, small intestine mucosa, large intestine, brain, lung, spleen, stomach and heart.

It is found in the cell membrane. It localises to the basal cell membrane. Its subcellular location is the apical cell membrane. It carries out the reaction dehydroepiandrosterone 3-sulfate(out) = dehydroepiandrosterone 3-sulfate(in). The catalysed reaction is estrone 3-sulfate(out) = estrone 3-sulfate(in). It catalyses the reaction estrone 3-sulfate(out) + hydrogencarbonate(in) = estrone 3-sulfate(in) + hydrogencarbonate(out). The enzyme catalyses taurocholate(out) = taurocholate(in). It carries out the reaction coproporphyrin III(out) = coproporphyrin III(in). The catalysed reaction is substance P(out) = substance P(in). It catalyses the reaction pregnenolone sulfate(out) = pregnenolone sulfate(in). The enzyme catalyses prostaglandin E2(out) = prostaglandin E2(in). It carries out the reaction prostaglandin D2(out) = prostaglandin D2(in). The catalysed reaction is L-thyroxine(out) = L-thyroxine(in). Its function is as follows. Mediates the Na(+)-independent transport of steroid sulfate conjugates such as estrone 3-sulfate (E1S), dehydroepiandrosterone sulfate (DHEA-S) and pregnenolone sulfate (PregS) and other specific organic anions. Responsible for the transport of E1S through the basal membrane of syncytiotrophoblast, highlighting a potential role in the placental absorption of fetal-derived sulfated steroids including DHEA-S. Also facilitates the uptake of sulfated steroids at the basal/sinusoidal membrane of hepatocytes, therefore accounting for the major part of organic anions clearance of liver. Mediates the intestinal uptake of sulfated steroids. Mediates the uptake of the neurosteroids DHEA-S and PregS into the endothelial cells of the blood-brain barrier as the first step to enter the brain. Also plays a role in the reuptake of neuropeptides such as substance P/TAC1 and vasoactive intestinal peptide/VIP released from retinal neurons. May act as a heme transporter that promotes cellular iron availability. Also transports heme by-product coproporphyrin III (CPIII), and may be involved in their hepatic disposition. Mediates the uptake of other substrates such as prostaglandins D2 (PGD2), E1 (PGE1) and E2 (PGE2), taurocholate, L-thyroxine, leukotriene C4 and thromboxane B2. May contribute to regulate the transport of organic compounds in testis across the blood-testis-barrier. Shows a pH-sensitive substrate specificity which may be ascribed to the protonation state of the binding site and leads to a stimulation of substrate transport in an acidic microenvironment. The exact transport mechanism has not been yet deciphered but most likely involves an anion exchange, coupling the cellular uptake of organic substrate with the efflux of an anionic compound. Hydrogencarbonate/HCO3(-) acts as a probable counteranion that exchanges for organic anions. Cytoplasmic glutamate may also act as counteranion in the placenta. An inwardly directed proton gradient has also been proposed as the driving force of E1S uptake with a (H(+):E1S) stoichiometry of (1:1). This Mus musculus (Mouse) protein is Solute carrier organic anion transporter family member 2B1.